The primary structure comprises 744 residues: Protein pthb1 homolog (744 aa).

Residues 722-733 (EHSPKELPKIRE) are compositionally biased toward basic and acidic residues. The tract at residues 722–744 (EHSPKELPKIREEEEEEEQQVTA) is disordered. The span at 734–744 (EEEEEEQQVTA) shows a compositional bias: acidic residues.

Part of BBSome complex, that contains bbs-1, bbs-2, bbs-4, bbs-5, osm-12, bbs-8/ttc-8 and bbs-9. Interacts with bbs-1.

Its function is as follows. Component of the BBSome complex. The BBSome complex is thought to function as a coat complex required for sorting of specific membrane proteins to the primary cilia. The BBSome complex is required for ciliogenesis but is dispensable for centriolar satellite function. Required for proper BBSome complex assembly and its ciliary localization. Required for cilia biogenesis and both the assembly and movement of intraflagellar transport proteins along the ciliary axoneme. In ciliated sensory neurons, required for the sensation of nitric oxide and avoidance of NO-producing organisms like P.aeruginosa. This Caenorhabditis elegans protein is Protein pthb1 homolog.